Reading from the N-terminus, the 225-residue chain is PKHD-type hydroxylase Smlt1146 (225 aa).

Residues 78–177 (KYLPPRFNRY…RVASFFWVQS (100 aa)) form the Fe2OG dioxygenase domain. Fe cation is bound by residues His-96, Asp-98, and His-158. Arg-168 provides a ligand contact to 2-oxoglutarate.

Fe(2+) serves as cofactor. Requires L-ascorbate as cofactor.

This Stenotrophomonas maltophilia (strain K279a) protein is PKHD-type hydroxylase Smlt1146.